A 176-amino-acid chain; its full sequence is NAD(P)H-quinone oxidoreductase subunit 6, chloroplastic (176 aa).

The next 5 helical transmembrane spans lie at 10–30, 32–52, 61–81, 92–112, and 152–172; these read FLLVFLGSGLILGSLGVVLLT, PIYSAFSLGLVLVCISLFYIL, AQLLIYVGAINILILFAVMFM, LWTVGDGITSLVCTSILVSLM, and FFLPFELISIILLVALIGAIA.

It belongs to the complex I subunit 6 family. NDH is composed of at least 16 different subunits, 5 of which are encoded in the nucleus.

It is found in the plastid. Its subcellular location is the chloroplast thylakoid membrane. The enzyme catalyses a plastoquinone + NADH + (n+1) H(+)(in) = a plastoquinol + NAD(+) + n H(+)(out). It catalyses the reaction a plastoquinone + NADPH + (n+1) H(+)(in) = a plastoquinol + NADP(+) + n H(+)(out). Functionally, NDH shuttles electrons from NAD(P)H:plastoquinone, via FMN and iron-sulfur (Fe-S) centers, to quinones in the photosynthetic chain and possibly in a chloroplast respiratory chain. The immediate electron acceptor for the enzyme in this species is believed to be plastoquinone. Couples the redox reaction to proton translocation, and thus conserves the redox energy in a proton gradient. The sequence is that of NAD(P)H-quinone oxidoreductase subunit 6, chloroplastic (ndhG) from Eucalyptus globulus subsp. globulus (Tasmanian blue gum).